An 89-amino-acid polypeptide reads, in one-letter code: Small ribosomal subunit protein uS15 (89 aa).

Over residues 1–21 the composition is skewed to basic and acidic residues; it reads MSVDAETKTKIIKDNARDKND. Positions 1 to 26 are disordered; that stretch reads MSVDAETKTKIIKDNARDKNDTGSPE.

Belongs to the universal ribosomal protein uS15 family. Part of the 30S ribosomal subunit. Forms a bridge to the 50S subunit in the 70S ribosome, contacting the 23S rRNA.

One of the primary rRNA binding proteins, it binds directly to 16S rRNA where it helps nucleate assembly of the platform of the 30S subunit by binding and bridging several RNA helices of the 16S rRNA. Its function is as follows. Forms an intersubunit bridge (bridge B4) with the 23S rRNA of the 50S subunit in the ribosome. The protein is Small ribosomal subunit protein uS15 of Erythrobacter litoralis (strain HTCC2594).